A 263-amino-acid chain; its full sequence is MKVESVTFLTLLGIGCVLSCCTIPSRPINMKFKNSVETDANANYNIGDTIEYLCLPGYRKQKMGPIYAKCTGTGWTLFNQCIKRRCPSPRDIDNGQLDIGGVDFGSSITYSCNSGYHLIGESKSYCELGSTGSMVWNPEAPICESVKCQSPPSISNGRHNGYEDFYTDGSVVTYSCNSGYSLIGNSGVLCSGGEWSDPPTCQIVKCPHPTISNGYLSSGFKRSYSYNDNVDFKCKYGYKLSGSSSSTCSPGNTWKPELPKCVR.

The signal sequence occupies residues 1–19 (MKVESVTFLTLLGIGCVLS). Sushi domains lie at 20–83 (CCTI…QCIK), 84–145 (RRCP…ICES), 146–203 (VKCQ…TCQI), and 204–263 (VKCP…KCVR). 8 cysteine pairs are disulfide-bonded: Cys-21/Cys-70, Cys-54/Cys-81, Cys-86/Cys-126, Cys-112/Cys-143, Cys-148/Cys-190, Cys-176/Cys-201, Cys-206/Cys-248, and Cys-234/Cys-261.

This sequence belongs to the receptors of complement activation (RCA) family. In terms of assembly, heterodimer with A56 protein; disulfide-linked.

The protein localises to the virion membrane. It localises to the host cell membrane. It is found in the secreted. In terms of biological role, serves to protect the virus against complement attack by inhibiting both classical and alternative pathways of complement activation. Binds C3b and C4b. The chain is Complement control protein C3 from Vaccinia virus (strain Copenhagen) (VACV).